The chain runs to 173 residues: Shikimate kinase 1 (173 aa).

Residue 14–19 coordinates ATP; the sequence is GAGKST. Residue serine 18 participates in Mg(2+) binding. 3 residues coordinate substrate: aspartate 36, arginine 60, and glycine 82. ATP is bound at residue arginine 120. A substrate-binding site is contributed by arginine 140. Position 157 (glutamine 157) interacts with ATP.

The protein belongs to the shikimate kinase family. As to quaternary structure, monomer. The cofactor is Mg(2+).

Its subcellular location is the cytoplasm. The enzyme catalyses shikimate + ATP = 3-phosphoshikimate + ADP + H(+). It functions in the pathway metabolic intermediate biosynthesis; chorismate biosynthesis; chorismate from D-erythrose 4-phosphate and phosphoenolpyruvate: step 5/7. Catalyzes the specific phosphorylation of the 3-hydroxyl group of shikimic acid using ATP as a cosubstrate. This Pectobacterium atrosepticum (strain SCRI 1043 / ATCC BAA-672) (Erwinia carotovora subsp. atroseptica) protein is Shikimate kinase 1.